A 90-amino-acid polypeptide reads, in one-letter code: Probable Fe(2+)-trafficking protein (90 aa).

Belongs to the Fe(2+)-trafficking protein family.

In terms of biological role, could be a mediator in iron transactions between iron acquisition and iron-requiring processes, such as synthesis and/or repair of Fe-S clusters in biosynthetic enzymes. The polypeptide is Probable Fe(2+)-trafficking protein (Thioalkalivibrio sulfidiphilus (strain HL-EbGR7)).